The following is a 206-amino-acid chain: Small ribosomal subunit protein uS4 (206 aa).

Basic and acidic residues predominate over residues 25–39 (DKLLDRKPNGPGKER). The interval 25 to 49 (DKLLDRKPNGPGKERGARKRGKTSV) is disordered. The S4 RNA-binding domain occupies 95–157 (QRLDNTIYRM…KGIQNLIRHN (63 aa)).

Belongs to the universal ribosomal protein uS4 family. Part of the 30S ribosomal subunit. Contacts protein S5. The interaction surface between S4 and S5 is involved in control of translational fidelity.

In terms of biological role, one of the primary rRNA binding proteins, it binds directly to 16S rRNA where it nucleates assembly of the body of the 30S subunit. With S5 and S12 plays an important role in translational accuracy. This chain is Small ribosomal subunit protein uS4, found in Treponema denticola (strain ATCC 35405 / DSM 14222 / CIP 103919 / JCM 8153 / KCTC 15104).